A 420-amino-acid polypeptide reads, in one-letter code: Phosphoglycerate kinase (420 aa).

Residues valine 26, aspartate 27, tyrosine 28, asparagine 29, glutamine 42, arginine 43, serine 66, histidine 67, glycine 69, arginine 70, leucine 125, arginine 126, histidine 173, and arginine 174 each coordinate (2R)-3-phosphoglycerate. Tyrosine 199 carries the post-translational modification Phosphotyrosine. Serine 206 carries the phosphoserine modification. The interval 209–228 (KPFLAILGGAKVSDKIKLIE) is calmodulin binding. Position 217 (glycine 217) interacts with ADP. Glycine 217 contacts CDP. AMP contacts are provided by alanine 218 and lysine 219. Alanine 218 is a binding site for ATP. Alanine 218 provides a ligand contact to Mg(2+). CDP is bound at residue aspartate 222. Mg(2+) is bound at residue aspartate 222. Residue lysine 223 coordinates AMP. Lysine 223 serves as a coordination point for ATP. ADP is bound at residue glycine 241. Residue glycine 241 coordinates CDP. Glycine 242 and glycine 316 together coordinate AMP. ATP is bound by residues glycine 242 and glycine 316. CDP contacts are provided by glycine 341 and phenylalanine 346. Residue phenylalanine 346 participates in ADP binding. An AMP-binding site is contributed by glutamate 347. ATP-binding residues include glutamate 347, aspartate 378, and threonine 379. Mg(2+) is bound at residue aspartate 378. A Phosphoserine modification is found at serine 393.

It belongs to the phosphoglycerate kinase family. In terms of assembly, monomer. Interacts with calmodulin in the presence of Ca(2+). Mg(2+) is required as a cofactor.

The protein resides in the cytoplasm. The enzyme catalyses (2R)-3-phosphoglycerate + ATP = (2R)-3-phospho-glyceroyl phosphate + ADP. The protein operates within carbohydrate degradation; glycolysis; pyruvate from D-glyceraldehyde 3-phosphate: step 2/5. The protein is Phosphoglycerate kinase of Dictyostelium discoideum (Social amoeba).